Here is a 519-residue protein sequence, read N- to C-terminus: Acetylcholine receptor subunit gamma (519 aa).

The signal sequence occupies residues 1–22 (MCGGQRPLFLLPLLAVCLGAKG). The Extracellular portion of the chain corresponds to 23–240 (RNQEERLLGD…VVFYLLIQRK (218 aa)). Asn52 and Asn163 each carry an N-linked (GlcNAc...) asparagine glycan. Cysteines 150 and 164 form a disulfide. 3 helical membrane-spanning segments follow: residues 241–265 (PLFY…IYFL), 274–292 (CTVA…FLVA), and 308–329 (YLTF…VLNV). Residues 330 to 476 (SLRSPHTHSM…WFLVGRVLDR (147 aa)) are Cytoplasmic-facing. Residues 477-497 (VCFLAMLSLFVCGTAGIFLMA) traverse the membrane as a helical segment.

Belongs to the ligand-gated ion channel (TC 1.A.9) family. Acetylcholine receptor (TC 1.A.9.1) subfamily. Gamma/CHRNG sub-subfamily. As to quaternary structure, pentamer of two alpha chains, and one each of the beta, delta, and gamma (in immature muscle) or epsilon (in mature muscle) chains.

It localises to the postsynaptic cell membrane. The protein resides in the cell membrane. The catalysed reaction is K(+)(in) = K(+)(out). It carries out the reaction Na(+)(in) = Na(+)(out). Its function is as follows. After binding acetylcholine, the AChR responds by an extensive change in conformation that affects all subunits and leads to opening of an ion-conducting channel across the plasma membrane. In Bos taurus (Bovine), this protein is Acetylcholine receptor subunit gamma (CHRNG).